The sequence spans 446 residues: Tol-Pal system protein TolB (446 aa).

The N-terminal stretch at 1–24 (MKRAFLSALSVGLAALFLTGPAQA) is a signal peptide.

Belongs to the TolB family. In terms of assembly, the Tol-Pal system is composed of five core proteins: the inner membrane proteins TolA, TolQ and TolR, the periplasmic protein TolB and the outer membrane protein Pal. They form a network linking the inner and outer membranes and the peptidoglycan layer.

It is found in the periplasm. Functionally, part of the Tol-Pal system, which plays a role in outer membrane invagination during cell division and is important for maintaining outer membrane integrity. The protein is Tol-Pal system protein TolB of Dinoroseobacter shibae (strain DSM 16493 / NCIMB 14021 / DFL 12).